Consider the following 184-residue polypeptide: Acireductone dioxygenase (184 aa).

The Fe(2+) site is built by histidine 97, histidine 99, glutamate 103, and histidine 141. The Ni(2+) site is built by histidine 97, histidine 99, glutamate 103, and histidine 141.

The protein belongs to the acireductone dioxygenase (ARD) family. In terms of assembly, monomer. Fe(2+) is required as a cofactor. Requires Ni(2+) as cofactor.

It catalyses the reaction 1,2-dihydroxy-5-(methylsulfanyl)pent-1-en-3-one + O2 = 3-(methylsulfanyl)propanoate + CO + formate + 2 H(+). The catalysed reaction is 1,2-dihydroxy-5-(methylsulfanyl)pent-1-en-3-one + O2 = 4-methylsulfanyl-2-oxobutanoate + formate + 2 H(+). The protein operates within amino-acid biosynthesis; L-methionine biosynthesis via salvage pathway; L-methionine from S-methyl-5-thio-alpha-D-ribose 1-phosphate: step 5/6. Catalyzes 2 different reactions between oxygen and the acireductone 1,2-dihydroxy-3-keto-5-methylthiopentene (DHK-MTPene) depending upon the metal bound in the active site. Fe-containing acireductone dioxygenase (Fe-ARD) produces formate and 2-keto-4-methylthiobutyrate (KMTB), the alpha-ketoacid precursor of methionine in the methionine recycle pathway. Ni-containing acireductone dioxygenase (Ni-ARD) produces methylthiopropionate, carbon monoxide and formate, and does not lie on the methionine recycle pathway. This chain is Acireductone dioxygenase, found in Parvibaculum lavamentivorans (strain DS-1 / DSM 13023 / NCIMB 13966).